The sequence spans 248 residues: Putative imidazole glycerol phosphate synthase subunit hisF2 (248 aa).

Asp129 is a catalytic residue.

Belongs to the HisA/HisF family. In terms of assembly, heterodimer of HisH and HisF.

It localises to the cytoplasm. The catalysed reaction is 5-[(5-phospho-1-deoxy-D-ribulos-1-ylimino)methylamino]-1-(5-phospho-beta-D-ribosyl)imidazole-4-carboxamide + L-glutamine = D-erythro-1-(imidazol-4-yl)glycerol 3-phosphate + 5-amino-1-(5-phospho-beta-D-ribosyl)imidazole-4-carboxamide + L-glutamate + H(+). The protein operates within amino-acid biosynthesis; L-histidine biosynthesis; L-histidine from 5-phospho-alpha-D-ribose 1-diphosphate: step 5/9. Its function is as follows. IGPS catalyzes the conversion of PRFAR and glutamine to IGP, AICAR and glutamate. The HisF subunit catalyzes the cyclization activity that produces IGP and AICAR from PRFAR using the ammonia provided by the HisH subunit. The protein is Putative imidazole glycerol phosphate synthase subunit hisF2 (hisF2) of Campylobacter jejuni subsp. jejuni serotype O:2 (strain ATCC 700819 / NCTC 11168).